Consider the following 166-residue polypeptide: Protein BioX (166 aa).

The next 5 membrane-spanning stretches (helical) occupy residues 12-32 (ISLLACLIIVTGMFKIPTGIP), 33-53 (GSEFQLSAPIAVAIAAVFGFK), 55-75 (YFLAGIIASLILFLLGIHSIL), 87-107 (VGLIIVLLGTSIPVLVVAGPI), and 117-137 (AFTLGTPFLPLFVLAIPGMVI).

It localises to the cell membrane. In terms of biological role, does not seem to be a permease of pimelate. Its role in biotin synthesis is not clear. This chain is Protein BioX (bioX), found in Lysinibacillus sphaericus (Bacillus sphaericus).